The chain runs to 157 residues: Large ribosomal subunit protein uL22 (157 aa).

Belongs to the universal ribosomal protein uL22 family. As to quaternary structure, part of the 50S ribosomal subunit.

Its function is as follows. This protein binds specifically to 23S rRNA. It makes multiple contacts with different domains of the 23S rRNA in the assembled 50S subunit and ribosome. The globular domain of the protein is located near the polypeptide exit tunnel on the outside of the subunit, while an extended beta-hairpin is found that lines the wall of the exit tunnel in the center of the 70S ribosome. The polypeptide is Large ribosomal subunit protein uL22 (Methanocorpusculum labreanum (strain ATCC 43576 / DSM 4855 / Z)).